We begin with the raw amino-acid sequence, 208 residues long: Outer-membrane lipoprotein carrier protein (208 aa).

A signal peptide spans M1 to A25.

Belongs to the LolA family. In terms of assembly, monomer.

The protein resides in the periplasm. Participates in the translocation of lipoproteins from the inner membrane to the outer membrane. Only forms a complex with a lipoprotein if the residue after the N-terminal Cys is not an aspartate (The Asp acts as a targeting signal to indicate that the lipoprotein should stay in the inner membrane). In Vibrio campbellii (strain ATCC BAA-1116), this protein is Outer-membrane lipoprotein carrier protein.